Here is a 461-residue protein sequence, read N- to C-terminus: MDYRVEKDTIGEIQVPADKYWGAQTQRSKQNFPIGNEKMPVEIIKAFAILKRSTAEANFELGLMERDKMEAIQYAADQVLNDSLTDHFPLVVWQTGSGTQSNMNVNEVLAFVGNKWLQEQGSDLKLHPNDDVNKSQSSNDTYPTAMHIAAVLKLEDTVLPALSQLKNTFAEKQSAFENIVKIGRTHLQDATPLTLGQEISGWHRMLEKSETMISESLEHLRELAIGGTAVGTGLNAHPDFSEKVCKAISTFTNKKFISAKNKFHSLTSHDETVYAHGALKGLAADLMKIANDVRWLASGPRCGIGEITIPANEPGSSIMPGKVNPTQSEAVTMVVTQVMGNDAAIGFAASQGNFELNVFKPVIAYNFLQSSQLLADSIISFDERCAVGIEPNHEQIEKNLNDSLMLVTALNPHIGYENAAKIAKKAFADNSTLKETAVELGLLTEEQFDEYVNPEEMTYPK.

Residues 97-99 (SGT), 127-130 (HPND), 137-139 (SSN), and T185 each bind substrate. H186 (proton donor/acceptor) is an active-site residue. S316 is an active-site residue. Substrate contacts are provided by residues S317 and 322–324 (KVN).

This sequence belongs to the class-II fumarase/aspartase family. Fumarase subfamily. In terms of assembly, homotetramer.

It is found in the cytoplasm. It catalyses the reaction (S)-malate = fumarate + H2O. It functions in the pathway carbohydrate metabolism; tricarboxylic acid cycle; (S)-malate from fumarate: step 1/1. Functionally, involved in the TCA cycle. Catalyzes the stereospecific interconversion of fumarate to L-malate. In Oceanobacillus iheyensis (strain DSM 14371 / CIP 107618 / JCM 11309 / KCTC 3954 / HTE831), this protein is Fumarate hydratase class II.